The primary structure comprises 275 residues: Large ribosomal subunit protein uL2 (275 aa).

2 disordered regions span residues 35–55 (EKQT…RHKG) and 223–260 (VAMN…KTRN). The segment covering 39 to 49 (RSSGRNNQGRV) has biased composition (polar residues).

The protein belongs to the universal ribosomal protein uL2 family. Part of the 50S ribosomal subunit. Forms a bridge to the 30S subunit in the 70S ribosome.

Its function is as follows. One of the primary rRNA binding proteins. Required for association of the 30S and 50S subunits to form the 70S ribosome, for tRNA binding and peptide bond formation. It has been suggested to have peptidyltransferase activity; this is somewhat controversial. Makes several contacts with the 16S rRNA in the 70S ribosome. The protein is Large ribosomal subunit protein uL2 of Methylococcus capsulatus (strain ATCC 33009 / NCIMB 11132 / Bath).